Here is a 620-residue protein sequence, read N- to C-terminus: Glutathione-regulated potassium-efflux system protein KefC (620 aa).

The next 12 helical transmembrane spans lie at 4–24 (HTLI…PIAV), 26–46 (LGLG…PWGL), 54–74 (SILH…GLEL), 90–110 (GALQ…LLGL), 114–134 (VAEL…MQAM), 149–169 (FAVL…IPLL), 178–198 (MGAF…VVLL), 218–238 (VFSA…EEVG), 270–290 (GLLL…GTLL), 294–314 (LRIV…LWLI), 327–347 (WFAV…GAAQ), and 359–379 (SLTL…VILN). The RCK N-terminal domain occupies 399-518 (QPRVIIAGFG…AGVEKPERET (120 aa)). The tract at residues 597–620 (GWQGTEEGKHTGNMADEPETKPSS) is disordered.

Belongs to the monovalent cation:proton antiporter 2 (CPA2) transporter (TC 2.A.37) family. KefC subfamily. Homodimer. Interacts with the regulatory subunit KefF.

It localises to the cell inner membrane. Its function is as follows. Pore-forming subunit of a potassium efflux system that confers protection against electrophiles. Catalyzes K(+)/H(+) antiport. This chain is Glutathione-regulated potassium-efflux system protein KefC, found in Escherichia coli (strain K12 / MC4100 / BW2952).